A 69-amino-acid polypeptide reads, in one-letter code: Sec-independent protein translocase protein TatA (69 aa).

The helical transmembrane segment at Met1–Gly21 threads the bilayer. The segment at Glu48–Ser69 is disordered.

This sequence belongs to the TatA/E family. Forms a complex with TatC.

The protein resides in the cell inner membrane. Functionally, part of the twin-arginine translocation (Tat) system that transports large folded proteins containing a characteristic twin-arginine motif in their signal peptide across membranes. TatA could form the protein-conducting channel of the Tat system. In Chlorobium phaeobacteroides (strain BS1), this protein is Sec-independent protein translocase protein TatA.